A 65-amino-acid chain; its full sequence is Small ribosomal subunit protein uS10 (65 aa).

Belongs to the universal ribosomal protein uS10 family. In terms of assembly, part of the 30S ribosomal subunit.

Its function is as follows. Involved in the binding of tRNA to the ribosomes. This Desulfurococcus mucosus (Desulfurococcus mobilis) protein is Small ribosomal subunit protein uS10 (rps10).